The primary structure comprises 248 residues: 3-deoxy-manno-octulosonate cytidylyltransferase (248 aa).

The protein belongs to the KdsB family.

The protein localises to the cytoplasm. The catalysed reaction is 3-deoxy-alpha-D-manno-oct-2-ulosonate + CTP = CMP-3-deoxy-beta-D-manno-octulosonate + diphosphate. It functions in the pathway nucleotide-sugar biosynthesis; CMP-3-deoxy-D-manno-octulosonate biosynthesis; CMP-3-deoxy-D-manno-octulosonate from 3-deoxy-D-manno-octulosonate and CTP: step 1/1. The protein operates within bacterial outer membrane biogenesis; lipopolysaccharide biosynthesis. Activates KDO (a required 8-carbon sugar) for incorporation into bacterial lipopolysaccharide in Gram-negative bacteria. The polypeptide is 3-deoxy-manno-octulosonate cytidylyltransferase (Chlorobaculum tepidum (strain ATCC 49652 / DSM 12025 / NBRC 103806 / TLS) (Chlorobium tepidum)).